Consider the following 484-residue polypeptide: Nuclear rim protein 1 (484 aa).

At S3 the chain carries Phosphoserine. 2 helical membrane-spanning segments follow: residues 145–165 and 252–272; these read FTIF…MFGY and TAIV…AIVF. The disordered stretch occupies residues 416–457; it reads SSNENLEKGGAYLPNQDQNRPSKSLSPLRKTPLSARQKRFEG. S417 is subject to Phosphoserine. The segment covering 430-440 has biased composition (polar residues); sequence NQDQNRPSKSL. A Phosphoserine modification is found at S474.

It belongs to the NUR1 family. As to quaternary structure, interacts with CSM1.

The protein localises to the nucleus membrane. In terms of biological role, member of a perinuclear network that controls recombination at multiple loci to maintain genome stability. Required for rDNA repeat stability. This Saccharomyces cerevisiae (strain ATCC 204508 / S288c) (Baker's yeast) protein is Nuclear rim protein 1 (NUR1).